A 358-amino-acid polypeptide reads, in one-letter code: Ganglioside-induced differentiation-associated protein 1 (358 aa).

Residues 24 to 105 (VHLILYHWTH…YLEQTFLDER (82 aa)) form the GST N-terminal domain. Glycyl lysine isopeptide (Lys-Gly) (interchain with G-Cter in ubiquitin) cross-links involve residues Lys50, Lys172, Lys173, Lys188, and Lys190. Positions 153–309 (PAYATTRIRS…LISAVLPTAF (157 aa)) constitute a GST C-terminal domain. Lys203 bears the N6-acetyllysine; alternate mark. Lys203 is covalently cross-linked (Glycyl lysine isopeptide (Lys-Gly) (interchain with G-Cter in ubiquitin); alternate). Glycyl lysine isopeptide (Lys-Gly) (interchain with G-Cter in ubiquitin) cross-links involve residues Lys206, Lys207, and Lys214. 2 helical membrane-spanning segments follow: residues 292-312 (VLGH…FRVA) and 320-340 (LGST…FMLF). A required for mitochondrial localization region spans residues 320 to 358 (LGSTLVVGLLVGMGYFAFMLFRRRLGSMILALRPRPNYF).

It belongs to the GST superfamily. In terms of assembly, homodimer. Ubiquitinated by PRKN during mitophagy, leading to its degradation and enhancement of mitophagy. Deubiquitinated by USP30. Expressed in brain, spinal cord, muscles and intestinal villi. In the central nervous system expressed most prominently in the cortex, cerebellum, thalamus, olfactory bulb, and spinal cord. Expressed also in sciatic nerves and in dorsal root ganglia.

It localises to the mitochondrion outer membrane. Its subcellular location is the cytoplasm. Functionally, regulates the mitochondrial network by promoting mitochondrial fission. This chain is Ganglioside-induced differentiation-associated protein 1 (Gdap1), found in Mus musculus (Mouse).